A 71-amino-acid chain; its full sequence is Large ribosomal subunit protein bL28 (71 aa).

The protein belongs to the bacterial ribosomal protein bL28 family.

This chain is Large ribosomal subunit protein bL28, found in Rubrobacter xylanophilus (strain DSM 9941 / JCM 11954 / NBRC 16129 / PRD-1).